Consider the following 282-residue polypeptide: ATP synthase subunit a (282 aa).

Helical transmembrane passes span 45–65, 106–126, 160–179, 232–252, and 253–273; these read AIHVDTMAISIALGFLFLWLF, IAPLALTIFVWVFLMNFMDLI, INATLGMSLSVFVLIVFYSI, LIFILIAILPWGVQWALSVPW, and AIFHILIIVLQAFIFMMLTIV.

It belongs to the ATPase A chain family. As to quaternary structure, F-type ATPases have 2 components, CF(1) - the catalytic core - and CF(0) - the membrane proton channel. CF(1) has five subunits: alpha(3), beta(3), gamma(1), delta(1), epsilon(1). CF(0) has three main subunits: a(1), b(2) and c(9-12). The alpha and beta chains form an alternating ring which encloses part of the gamma chain. CF(1) is attached to CF(0) by a central stalk formed by the gamma and epsilon chains, while a peripheral stalk is formed by the delta and b chains.

Its subcellular location is the cell inner membrane. Its function is as follows. Key component of the proton channel; it plays a direct role in the translocation of protons across the membrane. The protein is ATP synthase subunit a of Marinomonas sp. (strain MWYL1).